Here is a 2968-residue protein sequence, read N- to C-terminus: Trinucleotide repeat-containing gene 18 protein (2968 aa).

Disordered regions lie at residues 1–24 (MDGRDFGPQRSVHGPPPPLLSGLA) and 139–261 (GSPL…LAER). A compositionally biased stretch (low complexity) spans 139–150 (GSPLLSQLGQPS). Composition is skewed to basic and acidic residues over residues 221–233 (GKKDPRARGEEAS) and 243–260 (QEARAEGRQDRGPPRLAE). A Phosphoserine modification is found at S263. Over residues 304–322 (GAKEAARQDEGARLLRRTE) the composition is skewed to basic and acidic residues. Disordered regions lie at residues 304–356 (GAKE…PAGV) and 381–488 (FDER…PAAQ). Over residues 327 to 351 (GPRPCPSPLPPPPAPPKGPPAPPAA) the composition is skewed to pro residues. Composition is skewed to basic and acidic residues over residues 395-405 (RDARAREREAG), 419-431 (PLDRPEGLREKNS), and 464-479 (ELLKPEADPRPCERAP). S611 is modified (phosphoserine). Disordered stretches follow at residues 612–679 (PFGG…EVRH), 941–1002 (EHRA…SPVA), 1019–1055 (PAYAYPATPSSHPTSPPPASPPPTPGITRKEEAPENV), 1106–1190 (DADG…MATP), 1212–1236 (SCAEPSECPDFVEGPEPRVDSPGRT), 1279–1306 (LAQVAPSESQPTLEMSDCDVPAGEGQCP), 1497–1566 (KQRE…SDDY), and 1687–1855 (SLKS…RERA). K620 is covalently cross-linked (Glycyl lysine isopeptide (Lys-Gly) (interchain with G-Cter in SUMO2)). Basic and acidic residues-rich tracts occupy residues 651 to 660 (LKRDPERPES) and 941 to 955 (EHRAEMEEKGSKRGL). Positions 916–949 (LQQQAAQALELQRSAQLVQERLKAQEHRAEMEEK) form a coiled coil. 2 stretches are compositionally biased toward low complexity: residues 966-983 (AGPGLLPRKPPGLAAGPA) and 1019-1031 (PAYAYPATPSSHP). The span at 1032–1043 (TSPPPASPPPTP) shows a compositional bias: pro residues. Residues 1046–1055 (TRKEEAPENV) are compositionally biased toward basic and acidic residues. Residues S1127 and S1136 each carry the phosphoserine modification. Residues 1142–1162 (EPLREGPEEEPLAEREVKAEV) show a composition bias toward basic and acidic residues. Residues 1171–1181 (ELPPLESPLPL) show a composition bias toward pro residues. A coiled-coil region spans residues 1481-1516 (LDFRMRLAEVQRQYKEKQRELVKLQRRRDSEDRREE). The segment covering 1497–1519 (KQRELVKLQRRRDSEDRREEPHR) has biased composition (basic and acidic residues). Basic residues predominate over residues 1520-1534 (SLARRGPGRPRKRTH). S1540 carries the post-translational modification Phosphoserine. The span at 1549–1563 (GHSSGKLSSKSLLTS) shows a compositional bias: low complexity. Over residues 1816–1842 (SSEESFDQDESSEEEDEEEELEEEDEA) the composition is skewed to acidic residues. Residues S1857 and S1863 each carry the phosphoserine modification. 2 disordered regions span residues 1912–2148 (YTDS…LTPA) and 2295–2771 (LLVP…RLPS). Basic and acidic residues-rich tracts occupy residues 1957–1968 (SPDKAKLAVEKG) and 1993–2004 (LWTRRRSERIFL). Residues 2007 to 2024 (ASAAAPAPVSTAPATKTS) show a composition bias toward low complexity. The span at 2034–2046 (PRKDAGRAKDRKD) shows a compositional bias: basic and acidic residues. A compositionally biased stretch (low complexity) spans 2069–2085 (ALPSEARAPHASSLTAA). Residues 2093–2103 (KGKEVKKENRG) show a composition bias toward basic and acidic residues. Residue T2146 is modified to Phosphothreonine. Basic and acidic residues predominate over residues 2307 to 2316 (TSKDTGEGKD). Residues 2329–2338 (ARGRGRKPSA) are compositionally biased toward basic residues. Low complexity predominate over residues 2365 to 2374 (EPSSTPGSKK). Over residues 2375–2384 (SPPEPVDKRA) the composition is skewed to basic and acidic residues. Residues 2390-2401 (RPAPPQPSPAPP) show a composition bias toward pro residues. Residues 2411–2433 (PFAELPAPATSLAPAPLITMPAT) are compositionally biased toward low complexity. 2 stretches are compositionally biased toward basic and acidic residues: residues 2441–2468 (RAAEESGAKGPRRPGEEAELLVKLDHEG) and 2477–2487 (AKEALLLREDP). Low complexity-rich tracts occupy residues 2559-2580 (SSSSSSSGSSSSSSSSSSSGSE) and 2603-2671 (SAAS…SSSS). Acidic residues predominate over residues 2673–2685 (TDEDSSCSSDDEA). Pro residues predominate over residues 2723-2736 (APQPQAPPPQPTQP). S2771 bears the Phosphoserine mark. Residues 2817 to 2962 (EMIRIGDCAV…PTTGMIFSTD (146 aa)) form the BAH domain.

In Homo sapiens (Human), this protein is Trinucleotide repeat-containing gene 18 protein.